Here is a 313-residue protein sequence, read N- to C-terminus: Glutathione synthetase (313 aa).

One can recognise an ATP-grasp domain in the interval 125-309; sequence KIFVTEFADL…IASLFWDAVE (185 aa). ATP is bound at residue 151–207; the sequence is RKEFGDIIVKPLYGNGGAGIFHLHEADRNLASLLEMFGQLFREPYIVQRYLKDVRKG. Mg(2+) is bound by residues Glu-280 and Asn-282.

Belongs to the prokaryotic GSH synthase family. Mg(2+) is required as a cofactor. It depends on Mn(2+) as a cofactor.

It catalyses the reaction gamma-L-glutamyl-L-cysteine + glycine + ATP = glutathione + ADP + phosphate + H(+). It participates in sulfur metabolism; glutathione biosynthesis; glutathione from L-cysteine and L-glutamate: step 2/2. This Mesorhizobium japonicum (strain LMG 29417 / CECT 9101 / MAFF 303099) (Mesorhizobium loti (strain MAFF 303099)) protein is Glutathione synthetase.